A 122-amino-acid polypeptide reads, in one-letter code: Holo-[acyl-carrier-protein] synthase (122 aa).

Residues Asp-8 and Glu-56 each contribute to the Mg(2+) site.

It belongs to the P-Pant transferase superfamily. AcpS family. The cofactor is Mg(2+).

The protein resides in the cytoplasm. The catalysed reaction is apo-[ACP] + CoA = holo-[ACP] + adenosine 3',5'-bisphosphate + H(+). Its function is as follows. Transfers the 4'-phosphopantetheine moiety from coenzyme A to a Ser of acyl-carrier-protein. This Alkaliphilus oremlandii (strain OhILAs) (Clostridium oremlandii (strain OhILAs)) protein is Holo-[acyl-carrier-protein] synthase.